We begin with the raw amino-acid sequence, 157 residues long: Transcriptional repressor NrdR (157 aa).

Residues 1–21 (MRCPYCGSEDSQVKDSRPAED) form a disordered region. Residues 3-34 (CPYCGSEDSQVKDSRPAEDGNAIRRRRICPDC) fold into a zinc finger. Residues 11–21 (SQVKDSRPAED) show a composition bias toward basic and acidic residues. Positions 49-139 (LMIIKKTGRK…VYRDFSHAED (91 aa)) constitute an ATP-cone domain.

The protein belongs to the NrdR family. Requires Zn(2+) as cofactor.

Negatively regulates transcription of bacterial ribonucleotide reductase nrd genes and operons by binding to NrdR-boxes. In Sinorhizobium medicae (strain WSM419) (Ensifer medicae), this protein is Transcriptional repressor NrdR.